Here is a 457-residue protein sequence, read N- to C-terminus: uncharacterized protein (457 aa).

A TRAM domain is found at 5-63 (PVEEGQKFPLTIRRMGINGEGIGYFKKAVVFVPGAITGEEVVVEAVKVRDRFTEAKLNK). Positions 76, 82, 85, and 166 each coordinate [4Fe-4S] cluster. 4 residues coordinate S-adenosyl-L-methionine: glutamine 290, tyrosine 319, aspartate 340, and aspartate 388. The active-site Nucleophile is the cysteine 415.

The protein belongs to the class I-like SAM-binding methyltransferase superfamily. RNA M5U methyltransferase family.

This is an uncharacterized protein from Listeria innocua serovar 6a (strain ATCC BAA-680 / CLIP 11262).